Reading from the N-terminus, the 345-residue chain is NADH-quinone oxidoreductase subunit H (345 aa).

Residues 1–15 lie on the Lumenal side of the membrane; sequence MADFWATSLGQTLIL. Residues 16–35 traverse the membrane as a helical segment; that stretch reads LAQGLGIIAFVMIGLLLLVW. At 36 to 86 the chain is on the cytoplasmic side; sequence GDRKIWAAVQMRKGPNVVGAFGLLQSVADAAKYVFKEIVVPAGVDKPVYFL. The chain crosses the membrane as a helical span at residues 87 to 106; the sequence is APMLSLVLALLAWVVVPFNE. The Lumenal segment spans residues 107–110; it reads GWVM. Residues 111–130 form a helical membrane-spanning segment; that stretch reads ADINVAVLFVFAVSSLEVYG. Residues 131–156 lie on the Cytoplasmic side of the membrane; it reads VIMGGWASNSKYPFLGSLRSAAQMIS. A helical membrane pass occupies residues 157 to 176; the sequence is YEVSMGLIIVGVIISTGSMN. Residues 177 to 191 are Lumenal-facing; that stretch reads LSAIVEAQRGDFGLL. The helical transmembrane segment at 192-211 threads the bilayer; that stretch reads NWYWLPHLPMVALFFISALA. Residues 212 to 245 are Cytoplasmic-facing; that stretch reads ETNRPPFDLPEAESELVAGFMVEYSSTPYLLFMA. A helical transmembrane segment spans residues 246–265; it reads GEYIAVWLMCALTSVLFFGG. Residues 266-276 are Lumenal-facing; it reads WLSPIPGVPDG. Residues 277 to 296 traverse the membrane as a helical segment; it reads VLWMVAKMAAVFFVFAMVKA. The Cytoplasmic segment spans residues 297–313; that stretch reads IVPRYRYDQLMRIGWKV. The helical transmembrane segment at 314–333 threads the bilayer; the sequence is FLPLSLAWVVVVAFLAKFEV. Over 334-345 the chain is Lumenal; sequence LGGFWARWSIGA.

The protein belongs to the complex I subunit 1 family. As to quaternary structure, NDH-1 is composed of 14 different subunits. Subunits NuoA, H, J, K, L, M, N constitute the membrane sector of the complex.

It is found in the cellular chromatophore membrane. It catalyses the reaction a quinone + NADH + 5 H(+)(in) = a quinol + NAD(+) + 4 H(+)(out). NDH-1 shuttles electrons from NADH, via FMN and iron-sulfur (Fe-S) centers, to quinones in the respiratory chain. The immediate electron acceptor for the enzyme in this species is believed to be ubiquinone. Couples the redox reaction to proton translocation (for every two electrons transferred, four hydrogen ions are translocated across the cytoplasmic membrane), and thus conserves the redox energy in a proton gradient. This subunit may bind ubiquinone. The chain is NADH-quinone oxidoreductase subunit H from Rhodobacter capsulatus (Rhodopseudomonas capsulata).